Consider the following 393-residue polypeptide: SH3 domain-binding protein 5-like (393 aa).

Residues 1–58 (MAELRQVPGGRETPQGELRPEVVEDEVPRSPVAEEPGGGGSSSSEAKLSPREEEELDP) are disordered. A Phosphothreonine modification is found at T13. Residues 18 to 28 (LRPEVVEDEVP) are compositionally biased toward basic and acidic residues. S30 and S49 each carry phosphoserine. Coiled-coil stretches lie at residues 59–140 (RIQE…YERA) and 169–272 (WQEM…EQIH). Residues 273–332 (ARRRGGLPPHPLGPRRSSPVGAEAGPEDMEDGDSGIEGAEGAGLEEGSSLGPGPAPDTDT) are disordered. Residues 297 to 306 (GPEDMEDGDS) are compositionally biased toward acidic residues. A compositionally biased stretch (low complexity) spans 317–332 (EEGSSLGPGPAPDTDT). Residues S343, S350, S358, S362, and S378 each carry the phosphoserine modification. A disordered region spans residues 362–393 (SLDGQELGTRSGGRRGSDGGARGGRHQRSVSL). Basic residues predominate over residues 384 to 393 (GGRHQRSVSL).

Belongs to the SH3BP5 family.

Functionally, functions as a guanine nucleotide exchange factor (GEF) for RAB11A. In Homo sapiens (Human), this protein is SH3 domain-binding protein 5-like (SH3BP5L).